The sequence spans 293 residues: Undecaprenyl-diphosphatase (293 aa).

The next 7 membrane-spanning stretches (helical) occupy residues 3–23, 43–63, 85–105, 109–129, 203–223, 238–258, and 269–289; these read IALA…EFLP, KGKI…CWEF, INVI…GKAI, LFNP…ILWA, VATE…TVYE, IFAV…RWLL, and FAWY…THLI.

It belongs to the UppP family.

The protein resides in the cell inner membrane. The catalysed reaction is di-trans,octa-cis-undecaprenyl diphosphate + H2O = di-trans,octa-cis-undecaprenyl phosphate + phosphate + H(+). Functionally, catalyzes the dephosphorylation of undecaprenyl diphosphate (UPP). Confers resistance to bacitracin. In Ralstonia pickettii (strain 12J), this protein is Undecaprenyl-diphosphatase.